A 359-amino-acid polypeptide reads, in one-letter code: MLYHLLYPLHTHISFFNVFQYITFRTIYASLTAFLICFLLGPFTIRTLARMQIGQYIRELGPQSHQGKAGTPTMGGLLIVFSVLVACLLWADLTNRYIWVTLAALAGFTTIGFIDDYLMQIKKRNKGLSARAKFLAQTVLAAGICLLIFAASDTNTVLLVPFFKRVAPDLGLFYIVLGVFVIVGTSNAVNLTDGLDGLVTGPLVISFVAYMVFAYVAGNAIISNYLQVIHVPGSGEVTVFCGAMAGGLMGFLWFNAYPAQIFMGDVGSLSLGGALGTVAIITKQEILLTLVGGLFVVETLSVIFQVGFFKATKGRRIFRMAPLHHHFELKGWAEPKIIVRFWIIAIALALIAVSTLKIR.

The next 10 helical transmembrane spans lie at 21 to 41, 73 to 93, 98 to 118, 143 to 163, 166 to 186, 202 to 222, 237 to 257, 261 to 281, 286 to 306, and 336 to 356; these read YITFRTIYASLTAFLICFLLG, TMGGLLIVFSVLVACLLWADL, IWVTLAALAGFTTIGFIDDYL, GICLLIFAASDTNTVLLVPFF, VAPDLGLFYIVLGVFVIVGTS, PLVISFVAYMVFAYVAGNAII, VTVFCGAMAGGLMGFLWFNAY, IFMGDVGSLSLGGALGTVAII, ILLTLVGGLFVVETLSVIFQV, and KIIVRFWIIAIALALIAVSTL.

It belongs to the glycosyltransferase 4 family. MraY subfamily. It depends on Mg(2+) as a cofactor.

It is found in the cell inner membrane. The enzyme catalyses UDP-N-acetyl-alpha-D-muramoyl-L-alanyl-gamma-D-glutamyl-meso-2,6-diaminopimeloyl-D-alanyl-D-alanine + di-trans,octa-cis-undecaprenyl phosphate = di-trans,octa-cis-undecaprenyl diphospho-N-acetyl-alpha-D-muramoyl-L-alanyl-D-glutamyl-meso-2,6-diaminopimeloyl-D-alanyl-D-alanine + UMP. Its pathway is cell wall biogenesis; peptidoglycan biosynthesis. In terms of biological role, catalyzes the initial step of the lipid cycle reactions in the biosynthesis of the cell wall peptidoglycan: transfers peptidoglycan precursor phospho-MurNAc-pentapeptide from UDP-MurNAc-pentapeptide onto the lipid carrier undecaprenyl phosphate, yielding undecaprenyl-pyrophosphoryl-MurNAc-pentapeptide, known as lipid I. This is Phospho-N-acetylmuramoyl-pentapeptide-transferase from Desulfosudis oleivorans (strain DSM 6200 / JCM 39069 / Hxd3) (Desulfococcus oleovorans).